Here is a 963-residue protein sequence, read N- to C-terminus: Importin-13 (963 aa).

HEAT repeat units follow at residues 24 to 54, 56 to 88, 95 to 135, 142 to 179, 194 to 231, 236 to 268, 276 to 325, 330 to 372, 375 to 438, 440 to 476, 487 to 522, 524 to 558, 562 to 600, 603 to 648, 676 to 716, 720 to 754, 761 to 803, 815 to 845, 860 to 893, and 897 to 931; these read ENVE…QAQA, PQAW…KISR, TDQY…LSMM, AVAD…EFQT, LAVE…SWVQ, LQDC…NAIS, VNTL…ALLD, WQSF…DDIL, EAEK…YEML, AELL…FQSI, VVPG…WLAD, PVMI…CREC, LPPY…LLSA, VEEI…SNLF, PVVV…VKTL, FAPM…VHIF, FPPI…ALKR, VKAV…TELL, EDGR…FALN, and FSLL…QQIL. Residues 45–111 form the Importin N-terminal domain; it reads AQKWLMQAQA…KAQLFTQITR (67 aa).

This sequence belongs to the importin beta family. Interacts with UBC9, RAN, RBM8A, eIF-1A and PAX6.

Its subcellular location is the cytoplasm. The protein resides in the nucleus. In terms of biological role, functions in nuclear protein import as nuclear transport receptor. Serves as receptor for nuclear localization signals (NLS) in cargo substrates. Is thought to mediate docking of the importin/substrate complex to the nuclear pore complex (NPC) through binding to nucleoporin and the complex is subsequently translocated through the pore by an energy requiring, Ran-dependent mechanism. At the nucleoplasmic side of the NPC, Ran binds to the importin, the importin/substrate complex dissociates and importin is re-exported from the nucleus to the cytoplasm where GTP hydrolysis releases Ran. The directionality of nuclear import is thought to be conferred by an asymmetric distribution of the GTP- and GDP-bound forms of Ran between the cytoplasm and nucleus. Mediates the nuclear import of UBC9, the RBM8A/MAGOH complex, PAX6 and probably other members of the paired homeobox family. Also mediates nuclear export of eIF-1A, and the cytoplasmic release of eIF-1A is triggered by the loading of import substrates onto IPO13. In Bos taurus (Bovine), this protein is Importin-13 (IPO13).